Reading from the N-terminus, the 194-residue chain is dCTP deaminase (194 aa).

DCTP contacts are provided by residues R110–R115, D128, V136–E138, Y171, K178, and Q182. Residue E138 is the Proton donor/acceptor of the active site. The segment at K175 to D194 is disordered. The segment covering K180 to D194 has biased composition (polar residues).

This sequence belongs to the dCTP deaminase family. In terms of assembly, homotrimer.

It catalyses the reaction dCTP + H2O + H(+) = dUTP + NH4(+). The protein operates within pyrimidine metabolism; dUMP biosynthesis; dUMP from dCTP (dUTP route): step 1/2. Functionally, catalyzes the deamination of dCTP to dUTP. The chain is dCTP deaminase from Actinobacillus pleuropneumoniae serotype 5b (strain L20).